A 129-amino-acid chain; its full sequence is Small ribosomal subunit protein uS11 (129 aa).

The protein belongs to the universal ribosomal protein uS11 family. In terms of assembly, part of the 30S ribosomal subunit. Interacts with proteins S7 and S18. Binds to IF-3.

Located on the platform of the 30S subunit, it bridges several disparate RNA helices of the 16S rRNA. Forms part of the Shine-Dalgarno cleft in the 70S ribosome. In Parvibaculum lavamentivorans (strain DS-1 / DSM 13023 / NCIMB 13966), this protein is Small ribosomal subunit protein uS11.